We begin with the raw amino-acid sequence, 880 residues long: Valine--tRNA ligase (880 aa).

The 'HIGH' region signature appears at 49 to 59 (PNVTGRLHLGH). The 'KMSKS' region signature appears at 525–529 (KMSKS). Lys-528 contributes to the ATP binding site. Residues 809 to 879 (LEGLINIDEE…AVQKRMAELK (71 aa)) adopt a coiled-coil conformation.

This sequence belongs to the class-I aminoacyl-tRNA synthetase family. ValS type 1 subfamily. Monomer.

Its subcellular location is the cytoplasm. The catalysed reaction is tRNA(Val) + L-valine + ATP = L-valyl-tRNA(Val) + AMP + diphosphate. Functionally, as ValRS can inadvertently accommodate and process structurally similar amino acids such as threonine, to avoid such errors, it has a 'posttransfer' editing activity that hydrolyzes mischarged Thr-tRNA(Val) in a tRNA-dependent manner. Catalyzes the attachment of valine to tRNA(Val). This is Valine--tRNA ligase from Bacillus subtilis (strain 168).